A 596-amino-acid polypeptide reads, in one-letter code: Probable lysosomal cobalamin transporter (596 aa).

10 helical membrane passes run 13–33 (IWVA…ITTF), 45–65 (VSIV…LLPV), 99–119 (VVYY…IPFA), 150–170 (LGFV…PAAG), 201–221 (LLIT…LALL), 318–338 (LLGG…MLIT), 353–373 (GYIL…VQSA), 381–401 (ILMA…IATI), 425–445 (IATV…AMIV), and 512–532 (VFGA…MVVF). The N-linked (GlcNAc...) asparagine glycan is linked to Asn543. The disordered stretch occupies residues 576-596 (GRAKNRNGYGTGGGEGSNGRG). Residues 584–596 (YGTGGGEGSNGRG) are compositionally biased toward gly residues.

This sequence belongs to the LIMR family. LMBRD1 subfamily.

Its subcellular location is the lysosome membrane. Its function is as follows. Probable lysosomal cobalamin transporter. Required to export cobalamin from lysosomes allowing its conversion to cofactors. In Podospora anserina (strain S / ATCC MYA-4624 / DSM 980 / FGSC 10383) (Pleurage anserina), this protein is Probable lysosomal cobalamin transporter.